A 317-amino-acid polypeptide reads, in one-letter code: Methionyl-tRNA formyltransferase (317 aa).

A (6S)-5,6,7,8-tetrahydrofolate-binding site is contributed by 110-113 (SLLP).

The protein belongs to the Fmt family.

It carries out the reaction L-methionyl-tRNA(fMet) + (6R)-10-formyltetrahydrofolate = N-formyl-L-methionyl-tRNA(fMet) + (6S)-5,6,7,8-tetrahydrofolate + H(+). Attaches a formyl group to the free amino group of methionyl-tRNA(fMet). The formyl group appears to play a dual role in the initiator identity of N-formylmethionyl-tRNA by promoting its recognition by IF2 and preventing the misappropriation of this tRNA by the elongation apparatus. The protein is Methionyl-tRNA formyltransferase of Lactiplantibacillus plantarum (strain ATCC BAA-793 / NCIMB 8826 / WCFS1) (Lactobacillus plantarum).